Consider the following 520-residue polypeptide: Succinyl-CoA:3-ketoacid coenzyme A transferase 2A, mitochondrial (520 aa).

The transit peptide at 1-39 directs the protein to the mitochondrion; the sequence is MAALRLLAWALPRGVSALRPPPALPHRLIRRYVSDRSGS. Positions 280–299 are disordered; sequence ERLTTRDSKPAPGSKDNDPS. Glu-342 (5-glutamyl coenzyme A thioester intermediate) is an active-site residue.

This sequence belongs to the 3-oxoacid CoA-transferase family. As to quaternary structure, homodimer.

It localises to the mitochondrion. The catalysed reaction is a 3-oxo acid + succinyl-CoA = a 3-oxoacyl-CoA + succinate. It participates in ketone metabolism; succinyl-CoA degradation; acetoacetyl-CoA from succinyl-CoA: step 1/1. Functionally, key enzyme for ketone body catabolism. Transfers the CoA moiety from succinate to acetoacetate. Formation of the enzyme-CoA intermediate proceeds via an unstable anhydride species formed between the carboxylate groups of the enzyme and substrate. Probably play and important roles in the energy metabolism of spermatozoa. This is Succinyl-CoA:3-ketoacid coenzyme A transferase 2A, mitochondrial (Oxct2a) from Mus musculus (Mouse).